A 159-amino-acid polypeptide reads, in one-letter code: SsrA-binding protein (159 aa).

It belongs to the SmpB family.

It is found in the cytoplasm. Its function is as follows. Required for rescue of stalled ribosomes mediated by trans-translation. Binds to transfer-messenger RNA (tmRNA), required for stable association of tmRNA with ribosomes. tmRNA and SmpB together mimic tRNA shape, replacing the anticodon stem-loop with SmpB. tmRNA is encoded by the ssrA gene; the 2 termini fold to resemble tRNA(Ala) and it encodes a 'tag peptide', a short internal open reading frame. During trans-translation Ala-aminoacylated tmRNA acts like a tRNA, entering the A-site of stalled ribosomes, displacing the stalled mRNA. The ribosome then switches to translate the ORF on the tmRNA; the nascent peptide is terminated with the 'tag peptide' encoded by the tmRNA and targeted for degradation. The ribosome is freed to recommence translation, which seems to be the essential function of trans-translation. The sequence is that of SsrA-binding protein from Coxiella burnetii (strain CbuK_Q154) (Coxiella burnetii (strain Q154)).